The following is a 243-amino-acid chain: Ribosomal RNA small subunit methyltransferase G (243 aa).

S-adenosyl-L-methionine-binding positions include G80, F85, 132-133, and R151; that span reads IE.

It belongs to the methyltransferase superfamily. RNA methyltransferase RsmG family.

The protein resides in the cytoplasm. Functionally, specifically methylates the N7 position of a guanine in 16S rRNA. The protein is Ribosomal RNA small subunit methyltransferase G of Synechococcus sp. (strain CC9902).